Consider the following 105-residue polypeptide: Thioredoxin (105 aa).

The Thioredoxin domain occupies valine 1–alanine 105. Catalysis depends on nucleophile residues cysteine 29 and cysteine 32. Residues cysteine 29 and cysteine 32 are joined by a disulfide bond.

The protein belongs to the thioredoxin family. Monomer.

Its function is as follows. Participates in various redox reactions through the reversible oxidation of its active center dithiol to a disulfide and catalyzes dithiol-disulfide exchange reactions. This Malassezia sympodialis (Atopic eczema-associated yeast) protein is Thioredoxin.